The primary structure comprises 274 residues: 26S proteasome regulatory subunit RPN12 (274 aa).

The region spanning 76-251 (DSFENYFNQL…KADYEDEMMH (176 aa)) is the PCI domain.

This sequence belongs to the proteasome subunit S14 family.

Functionally, acts as a regulatory subunit of the 26S proteasome which is involved in the ATP-dependent degradation of ubiquitinated proteins. Necessary for activation of the CDC28 kinase. The protein is 26S proteasome regulatory subunit RPN12 (RPN12) of Saccharomyces cerevisiae (strain ATCC 204508 / S288c) (Baker's yeast).